Consider the following 135-residue polypeptide: NAD(P)H-quinone oxidoreductase subunit 3 (135 aa).

Transmembrane regions (helical) follow at residues Ile15–Val35, Met79–Val99, and Leu104–Val124.

It belongs to the complex I subunit 3 family. NDH-1 can be composed of about 15 different subunits; different subcomplexes with different compositions have been identified which probably have different functions.

It localises to the cellular thylakoid membrane. The enzyme catalyses a plastoquinone + NADH + (n+1) H(+)(in) = a plastoquinol + NAD(+) + n H(+)(out). It carries out the reaction a plastoquinone + NADPH + (n+1) H(+)(in) = a plastoquinol + NADP(+) + n H(+)(out). Functionally, NDH-1 shuttles electrons from an unknown electron donor, via FMN and iron-sulfur (Fe-S) centers, to quinones in the respiratory and/or the photosynthetic chain. The immediate electron acceptor for the enzyme in this species is believed to be plastoquinone. Couples the redox reaction to proton translocation, and thus conserves the redox energy in a proton gradient. Cyanobacterial NDH-1 also plays a role in inorganic carbon-concentration. The sequence is that of NAD(P)H-quinone oxidoreductase subunit 3 from Trichodesmium erythraeum (strain IMS101).